A 220-amino-acid polypeptide reads, in one-letter code: Iron-sulfur cluster repair protein YtfE (220 aa).

It belongs to the RIC family. YtfE subfamily. Homodimer.

Its subcellular location is the cytoplasm. Functionally, di-iron-containing protein involved in the repair of iron-sulfur clusters damaged by oxidative and nitrosative stress conditions. This Escherichia coli O81 (strain ED1a) protein is Iron-sulfur cluster repair protein YtfE.